The sequence spans 558 residues: Dihydroxy-acid dehydratase (558 aa).

D81 serves as a coordination point for Mg(2+). Position 122 (C122) interacts with [2Fe-2S] cluster. Mg(2+) contacts are provided by D123 and K124. K124 is modified (N6-carboxylysine). C195 is a [2Fe-2S] cluster binding site. E447 is a binding site for Mg(2+). Residue S473 is the Proton acceptor of the active site.

This sequence belongs to the IlvD/Edd family. As to quaternary structure, homodimer. It depends on [2Fe-2S] cluster as a cofactor. Requires Mg(2+) as cofactor.

The catalysed reaction is (2R)-2,3-dihydroxy-3-methylbutanoate = 3-methyl-2-oxobutanoate + H2O. It catalyses the reaction (2R,3R)-2,3-dihydroxy-3-methylpentanoate = (S)-3-methyl-2-oxopentanoate + H2O. It participates in amino-acid biosynthesis; L-isoleucine biosynthesis; L-isoleucine from 2-oxobutanoate: step 3/4. It functions in the pathway amino-acid biosynthesis; L-valine biosynthesis; L-valine from pyruvate: step 3/4. Its function is as follows. Functions in the biosynthesis of branched-chain amino acids. Catalyzes the dehydration of (2R,3R)-2,3-dihydroxy-3-methylpentanoate (2,3-dihydroxy-3-methylvalerate) into 2-oxo-3-methylpentanoate (2-oxo-3-methylvalerate) and of (2R)-2,3-dihydroxy-3-methylbutanoate (2,3-dihydroxyisovalerate) into 2-oxo-3-methylbutanoate (2-oxoisovalerate), the penultimate precursor to L-isoleucine and L-valine, respectively. This chain is Dihydroxy-acid dehydratase, found in Bacillus velezensis (strain DSM 23117 / BGSC 10A6 / LMG 26770 / FZB42) (Bacillus amyloliquefaciens subsp. plantarum).